A 103-amino-acid chain; its full sequence is Flagellar hook-basal body complex protein FliE (103 aa).

Belongs to the FliE family.

The protein localises to the bacterial flagellum basal body. This chain is Flagellar hook-basal body complex protein FliE, found in Yersinia pestis.